We begin with the raw amino-acid sequence, 187 residues long: Peptide deformylase (187 aa).

Fe cation is bound by residues Cys94 and His136. Glu137 is a catalytic residue. Position 140 (His140) interacts with Fe cation.

The protein belongs to the polypeptide deformylase family. Fe(2+) serves as cofactor.

The catalysed reaction is N-terminal N-formyl-L-methionyl-[peptide] + H2O = N-terminal L-methionyl-[peptide] + formate. Its function is as follows. Removes the formyl group from the N-terminal Met of newly synthesized proteins. Requires at least a dipeptide for an efficient rate of reaction. N-terminal L-methionine is a prerequisite for activity but the enzyme has broad specificity at other positions. The polypeptide is Peptide deformylase (Chlorobaculum tepidum (strain ATCC 49652 / DSM 12025 / NBRC 103806 / TLS) (Chlorobium tepidum)).